The following is a 483-amino-acid chain: Probable L-xylulose kinase (483 aa).

Belongs to the FGGY kinase family. In terms of assembly, homodimer.

The catalysed reaction is L-xylulose + ATP = L-xylulose 5-phosphate + ADP + H(+). The chain is Probable L-xylulose kinase (lyx) from Pasteurella multocida (strain Pm70).